The following is a 207-amino-acid chain: N-(5'-phosphoribosyl)anthranilate isomerase (207 aa).

It belongs to the TrpF family.

The catalysed reaction is N-(5-phospho-beta-D-ribosyl)anthranilate = 1-(2-carboxyphenylamino)-1-deoxy-D-ribulose 5-phosphate. Its pathway is amino-acid biosynthesis; L-tryptophan biosynthesis; L-tryptophan from chorismate: step 3/5. This chain is N-(5'-phosphoribosyl)anthranilate isomerase, found in Legionella pneumophila (strain Paris).